A 146-amino-acid chain; its full sequence is BCL7-like protein (146 aa).

The disordered stretch occupies residues 59-146; the sequence is MAPPKIKEVK…RDAEMTSKQP (88 aa). Polar residues-rich tracts occupy residues 75–90 and 113–134; these read NQVP…TSVT and DSNQ…TDFS. Positions 135-146 are enriched in basic and acidic residues; the sequence is SMRDAEMTSKQP.

The protein belongs to the BCL7 family. Ubiquitous.

It localises to the nucleus. Required for the terminal differentiation of seam cells, and the differentiation of distal tip cells important for normal somatic gonad and germ cell development. Plays a role in the Wnt signaling pathway, regulating the expression of beta-catenin homologs wrm-1, bar-1 and sys-1, and the localization of wrm-1 and the wnt signaling pathway component pop-1 during asymmetric cell division of seam cells and the Z-cell lineage of the somatic gonad, respectively. May have a pro-apoptotic role, possibly linked to the negative regulation of expression of anti-apoptotic factor ced-9. This chain is BCL7-like protein, found in Caenorhabditis elegans.